The following is a 32-amino-acid chain: Cytochrome b6-f complex subunit 7 (32 aa).

Residues A9 to L27 traverse the membrane as a helical segment.

The protein belongs to the PetM family. As to quaternary structure, the 4 large subunits of the cytochrome b6-f complex are cytochrome b6, subunit IV (17 kDa polypeptide, PetD), cytochrome f and the Rieske protein, while the 4 small subunits are PetG, PetL, PetM and PetN. The complex functions as a dimer.

It localises to the cellular thylakoid membrane. Its function is as follows. Component of the cytochrome b6-f complex, which mediates electron transfer between photosystem II (PSII) and photosystem I (PSI), cyclic electron flow around PSI, and state transitions. In Prochlorococcus marinus (strain MIT 9515), this protein is Cytochrome b6-f complex subunit 7.